Reading from the N-terminus, the 300-residue chain is Shikimate kinase, chloroplastic (300 aa).

Residues 1–65 constitute a chloroplast transit peptide; it reads MEARVSQSLQ…SDRRVQLKVS (65 aa). 111-118 lines the ATP pocket; that stretch reads GMMGCGKT. Thr-118 serves as a coordination point for Mg(2+). 3 residues coordinate substrate: Asp-136, Arg-161, and Gly-183. Arg-222 lines the ATP pocket.

This sequence belongs to the shikimate kinase family. Requires Mg(2+) as cofactor.

It is found in the plastid. It localises to the chloroplast. The catalysed reaction is shikimate + ATP = 3-phosphoshikimate + ADP + H(+). Its pathway is metabolic intermediate biosynthesis; chorismate biosynthesis; chorismate from D-erythrose 4-phosphate and phosphoenolpyruvate: step 5/7. Catalyzes the specific phosphorylation of the 3-hydroxyl group of shikimic acid using ATP as a cosubstrate. The polypeptide is Shikimate kinase, chloroplastic (SK) (Solanum lycopersicum (Tomato)).